We begin with the raw amino-acid sequence, 992 residues long: UPF0182 protein RHA1_ro06389 (992 aa).

Helical transmembrane passes span 18–38 (VLLV…RLIS), 63–83 (LLLF…ALLL), 114–134 (LFGL…AQSS), 174–194 (WLFV…YIFG), 211–231 (VQLA…YWFD), 260–280 (KLIL…AIFL), and 288–308 (MATA…PLVV). A disordered region spans residues 904-948 (TGSVATAPSAEEGTPPETGTTPPVDQGAAPAPTAPATPPSGTDVS). Positions 908-934 (ATAPSAEEGTPPETGTTPPVDQGAAPA) are enriched in low complexity.

The protein belongs to the UPF0182 family.

The protein localises to the cell membrane. In Rhodococcus jostii (strain RHA1), this protein is UPF0182 protein RHA1_ro06389.